The following is a 342-amino-acid chain: Anthranilate phosphoribosyltransferase (342 aa).

Residues Gly-81, 84-85, Thr-89, 91-94, 109-117, and Thr-121 each bind 5-phospho-alpha-D-ribose 1-diphosphate; these read GD, NIST, and KHGNRALSS. Gly-81 is an anthranilate binding site. Position 93 (Ser-93) interacts with Mg(2+). Asn-112 contacts anthranilate. Arg-167 serves as a coordination point for anthranilate. Mg(2+) contacts are provided by Asp-225 and Glu-226.

It belongs to the anthranilate phosphoribosyltransferase family. In terms of assembly, homodimer. It depends on Mg(2+) as a cofactor.

The enzyme catalyses N-(5-phospho-beta-D-ribosyl)anthranilate + diphosphate = 5-phospho-alpha-D-ribose 1-diphosphate + anthranilate. The protein operates within amino-acid biosynthesis; L-tryptophan biosynthesis; L-tryptophan from chorismate: step 2/5. Its function is as follows. Catalyzes the transfer of the phosphoribosyl group of 5-phosphorylribose-1-pyrophosphate (PRPP) to anthranilate to yield N-(5'-phosphoribosyl)-anthranilate (PRA). This Agrobacterium fabrum (strain C58 / ATCC 33970) (Agrobacterium tumefaciens (strain C58)) protein is Anthranilate phosphoribosyltransferase.